We begin with the raw amino-acid sequence, 484 residues long: GDP-mannose transporter (484 aa).

Basic and acidic residues-rich tracts occupy residues 1–12 (MSMTTSRERNVP) and 19–28 (ELGRSRHSDV). The tract at residues 1-34 (MSMTTSRERNVPPDDNEIELGRSRHSDVAPESES) is disordered. The Cytoplasmic segment spans residues 1–60 (MSMTTSRERNVPPDDNEIELGRSRHSDVAPESESPQAHLLNSDVASVTKNFMRNASHATA). The chain crosses the membrane as a helical span at residues 61 to 81 (NSGAIAAVLSYCIASISMTVI). Over 82-90 (NKFTVSGEK) the chain is Lumenal. The helical transmembrane segment at 91–111 (FTMNLLVLLCQCSVGVAMVYA) threads the bilayer. The Cytoplasmic portion of the chain corresponds to 112–129 (AKCMGWIQIRTLNMRDVK). A helical transmembrane segment spans residues 130–150 (TWFPISTMLVFVIYTGSKALQ). Topologically, residues 151–155 (HMDIP) are lumenal. The chain crosses the membrane as a helical span at residues 156–176 (IYTIFKNLTIILIAYGELLWF). The Cytoplasmic segment spans residues 177 to 179 (NGR). Residues 180 to 200 (ITPMVFLSFILMVLSSIIAAW) traverse the membrane as a helical segment. The Lumenal portion of the chain corresponds to 201 to 287 (PDLAPSTAKT…ASSSTLSSWS (87 aa)). The chain crosses the membrane as a helical span at residues 288-308 (TNGYVWMLANCMISATYVLVM). Residues 309–321 (RKRIKLTGFKDWD) are Cytoplasmic-facing. Residues 322–342 (TMFYNNLLSIPVLLFMSLLVE) form a helical membrane-spanning segment. Residue Asn-343 is glycosylated (N-linked (GlcNAc...) asparagine). The Lumenal segment spans residues 343–360 (NWSVETFEHNFPREKRST). The helical transmembrane segment at 361–381 (LVFAILLSGTGGVFISYTTAW) threads the bilayer. Over 382 to 390 (CIRVTSSTT) the chain is Cytoplasmic. A helical transmembrane segment spans residues 391–411 (YSMVGALNKLPLALSGMLFFG). Residues 412 to 413 (NP) are Lumenal-facing. Residues 414–434 (VTPYNSIGVAVGFIAGIVYAV) traverse the membrane as a helical segment. At 435–484 (GKYKQVVAARIANSDATGASTSLSSSSSAAPSGEYVFDLKGEIPTHTRQQ) the chain is on the cytoplasmic side.

The protein belongs to the TPT transporter family. SLC35D subfamily. Homooligomer.

Its subcellular location is the golgi apparatus membrane. It localises to the cytoplasmic vesicle membrane. The protein localises to the endoplasmic reticulum membrane. Functionally, involved in the import of GDP-mannose from the cytoplasm into the Golgi lumen. The polypeptide is GDP-mannose transporter (VRG4) (Malassezia globosa (strain ATCC MYA-4612 / CBS 7966) (Dandruff-associated fungus)).